The following is a 108-amino-acid chain: Class I hydrophobin 3 (108 aa).

A signal peptide spans 1 to 17 (MFFQTTIVAALAFLAVA). 4 disulfide bridges follow: Cys-28–Cys-87, Cys-35–Cys-81, Cys-36–Cys-69, and Cys-88–Cys-101. Asn-37 is a glycosylation site (N-linked (GlcNAc...) asparagine).

This sequence belongs to the fungal hydrophobin family. Self-assembles to form functional amyloid fibrils called rodlets. Self-assembly into fibrillar rodlets occurs spontaneously at hydrophobic:hydrophilic interfaces and the rodlets further associate laterally to form amphipathic monolayers.

It localises to the secreted. Its subcellular location is the cell wall. Aerial growth, conidiation, and dispersal of filamentous fungi in the environment rely upon a capability of their secreting small amphipathic proteins called hydrophobins (HPBs) with low sequence identity. Class I can self-assemble into an outermost layer of rodlet bundles on aerial cell surfaces, conferring cellular hydrophobicity that supports fungal growth, development and dispersal; whereas Class II form highly ordered films at water-air interfaces through intermolecular interactions but contribute nothing to the rodlet structure. Vmh3 is a class I hydrophobin that is essential for the maintenance of the surface hydrophobicity of the mycelium and might be involved in the development of fruiting bodies. Plays an important role in hyphal resistance against environmental stress. Necessary for the efficient biodegradation of lignin. This is Class I hydrophobin 3 from Pleurotus ostreatus (Oyster mushroom).